A 186-amino-acid chain; its full sequence is Ribosome-recycling factor (186 aa).

This sequence belongs to the RRF family.

The protein localises to the cytoplasm. Functionally, responsible for the release of ribosomes from messenger RNA at the termination of protein biosynthesis. May increase the efficiency of translation by recycling ribosomes from one round of translation to another. This is Ribosome-recycling factor from Brucella abortus (strain S19).